The primary structure comprises 830 residues: WD repeat-containing protein 75 (830 aa).

WD repeat units follow at residues 4–43 (EENIRVVRCGGSELNFRRAVFSADSKYIFCVSGDFVKVYS), 47–86 (EECVHILHGHRNLVTGIQLNPNNHLQLYSCSLDGTIKLWD), 90–131 (GILI…QLVS), 145–184 (KELSFVLDYINQSPKCIAFGNEGVYVAAVREFYLSVYFFK), 193–231 (LSSSRNKKHAKNNFTCVACHPTEDCIASGHMDGKIRLWR), 237–276 (KKYTYTCLHWHHDMVMDLAFSVTGTSLLSGGRESVLVEWR), 279–318 (TEKNKEFLPRLGATIEHISVSPAGDLFCTSHSDNKIIIIH), 324–362 (SAVIQGLVKDRSIFTGLMIDPRTKALVLNGKPGHLQFYS), and 376–423 (QQEY…KLWM). Lysine 123 is covalently cross-linked (Glycyl lysine isopeptide (Lys-Gly) (interchain with G-Cter in SUMO2)). Residue lysine 427 forms a Glycyl lysine isopeptide (Lys-Gly) (interchain with G-Cter in SUMO2) linkage. WD repeat units follow at residues 430–474 (GFIL…KVWI), 487–525 (GWTCDFVGSYHKYQATNCCFSEDGSLLAVSFEEIVTIWD), 529–569 (WELK…CCWN), and 574–611 (ALEWNAKLNVRVMEPDPNSENIAAISQSSVGSDLFVFK). At lysine 466 the chain carries N6-acetyllysine. Serine 664 and serine 672 each carry phosphoserine. Residue lysine 676 forms a Glycyl lysine isopeptide (Lys-Gly) (interchain with G-Cter in SUMO2) linkage. Residues 763–806 (SAKEIPEDVDMEEEKESEDSDEENDFTEKVQDTSNTGLGEDIIH) are disordered. The span at 769 to 787 (EDVDMEEEKESEDSDEEND) shows a compositional bias: acidic residues. Phosphoserine is present on residues serine 779, serine 782, serine 796, and serine 811.

Component of the proposed t-UTP subcomplex of the ribosomal small subunit (SSU) processome. SSU processome is composed of more than 70 proteins and the RNA chaperone small nucleolar RNA (snoRNA) U3.

The protein resides in the nucleus. The protein localises to the nucleolus. Its function is as follows. Ribosome biogenesis factor. Part of the small subunit (SSU) processome, first precursor of the small eukaryotic ribosomal subunit. During the assembly of the SSU processome in the nucleolus, many ribosome biogenesis factors, an RNA chaperone and ribosomal proteins associate with the nascent pre-rRNA and work in concert to generate RNA folding, modifications, rearrangements and cleavage as well as targeted degradation of pre-ribosomal RNA by the RNA exosome. Involved in nucleolar processing of pre-18S ribosomal RNA. Required for optimal pre-ribosomal RNA transcription by RNA polymerase I. This is WD repeat-containing protein 75 from Homo sapiens (Human).